The primary structure comprises 347 residues: Neutral protease 2 homolog MGG_10927 (347 aa).

The first 19 residues, 1-19 (MKYSVGITALLATLAQGAA), serve as a signal peptide directing secretion. The propeptide occupies 20–176 (VMSKRDIPLD…RSYLAKRTMV (157 aa)). 2 cysteine pairs are disulfide-bonded: cysteine 180–cysteine 250 and cysteine 257–cysteine 275. Histidine 299 lines the Zn(2+) pocket. Glutamate 300 is an active-site residue. Position 303 (histidine 303) interacts with Zn(2+).

Belongs to the peptidase M35 family. It depends on Zn(2+) as a cofactor.

Its subcellular location is the secreted. The catalysed reaction is Preferential cleavage of bonds with hydrophobic residues in P1'. Also 3-Asn-|-Gln-4 and 8-Gly-|-Ser-9 bonds in insulin B chain.. Functionally, secreted metalloproteinase that allows assimilation of proteinaceous substrates. Shows high activities on basic nuclear substrates such as histone and protamine. This is Neutral protease 2 homolog MGG_10927 from Pyricularia oryzae (strain 70-15 / ATCC MYA-4617 / FGSC 8958) (Rice blast fungus).